We begin with the raw amino-acid sequence, 926 residues long: MALKSPAFRKKFPLLVTGSLLAMQPLATQFVVAAEQYDCSVSASGAWNCAPKSNAAAVDLPPRPVHDTTSVSSNGTVTSQGTSSGEQSAGTQLVTEAKGKGLKSRSADYSHLDWVPREKLTAAQLAETGPYCSGAYVEPIRPGMDDKTPMKDAPMFVGAKASRYEQDAQVATLAGDVVMRQGSMQVQAQEAALHQAENRGELNGDVRLRDNGALIVGDKAELQLDTGEARVDNAEYVLHKSNIRGNALYAKRAENAIIRLKDGTYTTCEPNSNAWTLKGNNITLNPATGFGTATNVTLRVKDIPVLYTPYIYFPIDDRRQSGFLPPTIAAGGDNGFTLVTPYYFNLAPNYDATLYPRYMADRGLLMEGEFRYLTKGSEGQFGGAYLNDENDDRKQQSDYDKTRWMINWQHKGGLDTRWLTQVDYTDISDPYYFQDLETDQIGVKRTDFLNQQGSLTYRGDSFSAVLNAQAYKLATVANVTPYNRLPQLTLNGTLPYNPGGLKFDYQTEAVRFERDLRSGAFIDEDGNSETRLDNNISGLARANGDRLNLAPSVSLPMNWTYGFLTPKLKYVYTQYDLDLDSQGKNTLLAGEEYSSSQSRSVPIFSVDSGLYFDRNTNWFGKDYRQTLEPRLFYLYVPEKDQTDIPVFDTSESTFNYASLFRDNRFTGSDRIGDENKLSLGVTNRWIEDNGFERQRFSIGQALYFEDRKVQLPGVVFADRDDARSNVSPYALEYEYRFNRDWRFNSDFNWDPDSRSTRSGSAMFHYQPEDNPNKVVNLGYRYRNDQIRYDESTGRWVVGGGDYGTPGSPNYVKDYYKIQQHDFSVIWPIVPQWSLISRWQYDYNRERTIEAFGGFEYDNCCWKMRLVNRYWIDYDEFSQAAPQNEKGDRGIFLQIVLKGLGGVTGAKVDSFLDKGIQGYREREDQAF.

Residues 1 to 22 (MALKSPAFRKKFPLLVTGSLLA) form the signal peptide. Residues 55–91 (AAAVDLPPRPVHDTTSVSSNGTVTSQGTSSGEQSAGT) are disordered. The span at 68–91 (TTSVSSNGTVTSQGTSSGEQSAGT) shows a compositional bias: low complexity.

It belongs to the LptD family. As to quaternary structure, component of the lipopolysaccharide transport and assembly complex. Interacts with LptE and LptA.

Its subcellular location is the cell outer membrane. Functionally, together with LptE, is involved in the assembly of lipopolysaccharide (LPS) at the surface of the outer membrane. In Pseudomonas syringae pv. syringae (strain B728a), this protein is LPS-assembly protein LptD.